The chain runs to 1673 residues: NBPF family member NBPF26 (1673 aa).

EGF-like domains lie at 24–63 (HALQ…EYCQ), 64–102 (HRDP…EDCQ), 105–143 (TPHP…KECQ), and 144–180 (WTDA…QKCE). 17 disulfides stabilise this stretch: Cys-28–Cys-41, Cys-35–Cys-51, Cys-53–Cys-62, Cys-68–Cys-79, Cys-73–Cys-90, Cys-92–Cys-101, Cys-109–Cys-121, Cys-115–Cys-131, Cys-133–Cys-142, Cys-148–Cys-159, Cys-153–Cys-168, Cys-170–Cys-179, Cys-186–Cys-198, Cys-192–Cys-207, Cys-209–Cys-218, Cys-225–Cys-236, and Cys-230–Cys-246. Residues 182–219 (DVNECDIPGHCQHGGTCLNLPGSYQCQCLQGFTGQYCD) form the EGF-like 5; calcium-binding domain. The EGF-like 6 domain maps to 221-258 (LYVPCAHSPCVNGGTCRQTGDFTFECNCLPVPDSTSSA). A coiled-coil region spans residues 337 to 381 (RQFKEEKLAEQLKQAEELRQYKVLVHSQERELTQLKEKLREGRDA). 3 disordered regions span residues 423–463 (KLSP…KVPE), 713–734 (EKVQ…EVPE), and 782–828 (WEDA…EGYS). Over residues 427–443 (ENDEDEDEDVQVEEDEK) the composition is skewed to acidic residues. Olduvai domains lie at 427–521 (ENDE…NILP), 698–790 (ENDN…HIIP), 791–879 (ENES…ATGP), 882–937 (SREL…VDMD), 938–1029 (EIEK…PSCP), 1032–1104 (SGEL…PSCP), 1107–1162 (SREL…LDVD), 1163–1255 (RIKK…RSKK), 1256–1348 (ERRR…PSCP), 1351–1423 (SREL…PSCP), 1426–1481 (SREL…LDVD), 1482–1574 (RIKK…RSKK), and 1575–1673 (ERRR…IFPQ). Basic and acidic residues predominate over residues 452 to 463 (EVQKTEESKVPE). Acidic residues-rich tracts occupy residues 792–801 (NESDDEEEEE) and 812–824 (ESEE…ESWD). The segment at 1242–1280 (KGKGKKRRGRRSKKERRRGRKEGEEDQNPPCPRLSRELL) is disordered. Over residues 1243-1261 (GKGKKRRGRRSKKERRRGR) the composition is skewed to basic residues. The interval 1561-1594 (KGKGKKRRGRRSKKERRRGRKEGEEDQNPPCPRL) is disordered. Basic residues predominate over residues 1562–1580 (GKGKKRRGRRSKKERRRGR).

This sequence belongs to the NBPF family.

The protein localises to the cytoplasm. In Homo sapiens (Human), this protein is NBPF family member NBPF26.